The chain runs to 495 residues: tRNA modification GTPase MnmE (495 aa).

Positions 28, 89, and 128 each coordinate (6S)-5-formyl-5,6,7,8-tetrahydrofolate. In terms of domain architecture, TrmE-type G spans 223–417 (GVRIVLGGCP…LRAQTLHLLH (195 aa)). Asn233 contacts K(+). Residues 233–238 (NAGKSS), 252–258 (SSVPGTT), and 277–280 (DTAG) each bind GTP. Position 237 (Ser237) interacts with Mg(2+). Residues Ser252, Val254, and Thr257 each coordinate K(+). Thr258 provides a ligand contact to Mg(2+). A (6S)-5-formyl-5,6,7,8-tetrahydrofolate-binding site is contributed by Lys495.

This sequence belongs to the TRAFAC class TrmE-Era-EngA-EngB-Septin-like GTPase superfamily. TrmE GTPase family. In terms of assembly, homodimer. Heterotetramer of two MnmE and two MnmG subunits. The cofactor is K(+).

Its subcellular location is the cytoplasm. In terms of biological role, exhibits a very high intrinsic GTPase hydrolysis rate. Involved in the addition of a carboxymethylaminomethyl (cmnm) group at the wobble position (U34) of certain tRNAs, forming tRNA-cmnm(5)s(2)U34. The polypeptide is tRNA modification GTPase MnmE (Treponema pallidum (strain Nichols)).